The chain runs to 113 residues: MTDTHSIAQPFEAEVSPANNRQLTVSYASRYPDYSRIPAITLKGQWLEAAGFATGTVVDVKVMEGCIVLTAQPPAAAESELMQSLRQVCKLSARKQRQVQEFIGVIAGKQKVA.

Residues 29 to 74 form the SpoVT-AbrB domain; the sequence is SRYPDYSRIPAITLKGQWLEAAGFATGTVVDVKVMEGCIVLTAQPP.

Belongs to the SymE family.

The protein localises to the cytoplasm. In terms of biological role, involved in the degradation and recycling of damaged RNA. It is itself a target for degradation by the ATP-dependent protease Lon. This Escherichia coli (strain 55989 / EAEC) protein is Endoribonuclease SymE.